The following is a 137-amino-acid chain: Small ribosomal subunit protein uS9c (137 aa).

This sequence belongs to the universal ribosomal protein uS9 family.

Its subcellular location is the plastid. The protein localises to the chloroplast. This is Small ribosomal subunit protein uS9c (rps9) from Chlorella vulgaris (Green alga).